Consider the following 765-residue polypeptide: 1,4-alpha-glucan branching enzyme GlgB (765 aa).

The active-site Nucleophile is the D431. E484 acts as the Proton donor in catalysis.

The protein belongs to the glycosyl hydrolase 13 family. GlgB subfamily. As to quaternary structure, monomer.

The catalysed reaction is Transfers a segment of a (1-&gt;4)-alpha-D-glucan chain to a primary hydroxy group in a similar glucan chain.. The protein operates within glycan biosynthesis; glycogen biosynthesis. In terms of biological role, catalyzes the formation of the alpha-1,6-glucosidic linkages in glycogen by scission of a 1,4-alpha-linked oligosaccharide from growing alpha-1,4-glucan chains and the subsequent attachment of the oligosaccharide to the alpha-1,6 position. This chain is 1,4-alpha-glucan branching enzyme GlgB, found in Synechococcus sp. (strain CC9605).